The chain runs to 366 residues: MPRSPHPPRRATLASLAAELKVSRTTISNAYNRPDQLSADLRERIFDAAKRLGYPGPDPVARSLRTRKAGAVGLMITEPLDYSFSDPAALDFVAGLAESCEEAGQGLLLVAVGPNRTFEEGSNSVLAAGVDGFVVYSASDDDPYLPVLQQRQLPMVVVDQPKDVPGVSRISIDDRGAMRELAEYVLELGHRDIGLLTMRLGRDWPHGDPRPALADPERVLSPHFHVQRERIHGVYDAMSAAGLDPSSLTVVESYEHLPTSGGAAAEVALEVNPRITALMCTADVLALSAMDHLRSRGIYVPGHMTVTGFDGVRDALRRGLTTVKQPSMEKGRRAGHLLHNPPGSGLPVIDVLETEVVRGRTSGPPA.

Residues 11–66 form the HTH lacI-type domain; it reads ATLASLAAELKVSRTTISNAYNRPDQLSADLRERIFDAAKRLGYPGPDPVARSLRT. The segment at residues 13-32 is a DNA-binding region (H-T-H motif); that stretch reads LASLAAELKVSRTTISNAYN.

Functionally, transcriptional regulator that negatively regulates transcription of the mce4 operon, which is involved in cholesterol transport and utilization. Acts by binding to the promoter region of the mce4 operon. The chain is HTH-type transcriptional regulator MSMEG_6044/MSMEI_5883 from Mycolicibacterium smegmatis (strain ATCC 700084 / mc(2)155) (Mycobacterium smegmatis).